The primary structure comprises 345 residues: Phosphoribosylformylglycinamidine cyclo-ligase (345 aa).

It belongs to the AIR synthase family.

The protein resides in the cytoplasm. It catalyses the reaction 2-formamido-N(1)-(5-O-phospho-beta-D-ribosyl)acetamidine + ATP = 5-amino-1-(5-phospho-beta-D-ribosyl)imidazole + ADP + phosphate + H(+). The protein operates within purine metabolism; IMP biosynthesis via de novo pathway; 5-amino-1-(5-phospho-D-ribosyl)imidazole from N(2)-formyl-N(1)-(5-phospho-D-ribosyl)glycinamide: step 2/2. The chain is Phosphoribosylformylglycinamidine cyclo-ligase from Salmonella typhi.